A 228-amino-acid chain; its full sequence is Cytochrome c oxidase subunit 2 (228 aa).

Residues 1–14 (MANHSQLGFQDASS) lie on the Mitochondrial intermembrane side of the membrane. The chain crosses the membrane as a helical span at residues 15 to 45 (PIMEELVEFHDHALIVALAICSLVLYLLAHM). Over 46-58 (LMEKLSSNAVDAQ) the chain is Mitochondrial matrix. The chain crosses the membrane as a helical span at residues 59 to 86 (EVELIWTILPAIVLVLLALPSLQILYMM). The Mitochondrial intermembrane portion of the chain corresponds to 87-228 (DEIDEPDLTL…ETWSSLLSAS (142 aa)). Positions 160, 195, 197, 199, 203, and 206 each coordinate Cu cation. Mg(2+) is bound at residue glutamate 197.

The protein belongs to the cytochrome c oxidase subunit 2 family. In terms of assembly, component of the cytochrome c oxidase (complex IV, CIV), a multisubunit enzyme composed of 14 subunits. The complex is composed of a catalytic core of 3 subunits MT-CO1, MT-CO2 and MT-CO3, encoded in the mitochondrial DNA, and 11 supernumerary subunits COX4I, COX5A, COX5B, COX6A, COX6B, COX6C, COX7A, COX7B, COX7C, COX8 and NDUFA4, which are encoded in the nuclear genome. The complex exists as a monomer or a dimer and forms supercomplexes (SCs) in the inner mitochondrial membrane with NADH-ubiquinone oxidoreductase (complex I, CI) and ubiquinol-cytochrome c oxidoreductase (cytochrome b-c1 complex, complex III, CIII), resulting in different assemblies (supercomplex SCI(1)III(2)IV(1) and megacomplex MCI(2)III(2)IV(2)). Found in a complex with TMEM177, COA6, COX18, COX20, SCO1 and SCO2. Interacts with TMEM177 in a COX20-dependent manner. Interacts with COX20. Interacts with COX16. Cu cation serves as cofactor.

It localises to the mitochondrion inner membrane. It carries out the reaction 4 Fe(II)-[cytochrome c] + O2 + 8 H(+)(in) = 4 Fe(III)-[cytochrome c] + 2 H2O + 4 H(+)(out). Functionally, component of the cytochrome c oxidase, the last enzyme in the mitochondrial electron transport chain which drives oxidative phosphorylation. The respiratory chain contains 3 multisubunit complexes succinate dehydrogenase (complex II, CII), ubiquinol-cytochrome c oxidoreductase (cytochrome b-c1 complex, complex III, CIII) and cytochrome c oxidase (complex IV, CIV), that cooperate to transfer electrons derived from NADH and succinate to molecular oxygen, creating an electrochemical gradient over the inner membrane that drives transmembrane transport and the ATP synthase. Cytochrome c oxidase is the component of the respiratory chain that catalyzes the reduction of oxygen to water. Electrons originating from reduced cytochrome c in the intermembrane space (IMS) are transferred via the dinuclear copper A center (CU(A)) of subunit 2 and heme A of subunit 1 to the active site in subunit 1, a binuclear center (BNC) formed by heme A3 and copper B (CU(B)). The BNC reduces molecular oxygen to 2 water molecules using 4 electrons from cytochrome c in the IMS and 4 protons from the mitochondrial matrix. The protein is Cytochrome c oxidase subunit 2 (MT-CO2) of Cairina moschata (Muscovy duck).